A 611-amino-acid chain; its full sequence is Chaperone protein DnaK (611 aa).

The residue at position 173 (Thr-173) is a Phosphothreonine; by autocatalysis. Residues 577–591 (AAAAQAAQGGEADAG) show a composition bias toward low complexity. A disordered region spans residues 577–611 (AAAAQAAQGGEADAGAGKKDDGVVDADFEEVKDDK). Residues 599-611 (VVDADFEEVKDDK) are compositionally biased toward acidic residues.

Belongs to the heat shock protein 70 family.

Acts as a chaperone. The protein is Chaperone protein DnaK of Lysinibacillus sphaericus (strain C3-41).